A 346-amino-acid polypeptide reads, in one-letter code: Porin Omp2a (346 aa).

The N-terminal stretch at 1–22 (MNIKSLLLGSAAALVAASGAQA) is a signal peptide.

The protein belongs to the alphaproteobacteria porin family. In terms of assembly, monomer.

Its subcellular location is the cell outer membrane. In terms of biological role, forms passive diffusion pores that allow small molecular weight hydrophilic materials across the outer membrane. This Brucella ovis protein is Porin Omp2a (omp2a).